A 267-amino-acid chain; its full sequence is Acyl-[acyl-carrier-protein]--UDP-N-acetylglucosamine O-acyltransferase (267 aa).

This sequence belongs to the transferase hexapeptide repeat family. LpxA subfamily. In terms of assembly, homotrimer.

It is found in the cytoplasm. It catalyses the reaction a (3R)-hydroxyacyl-[ACP] + UDP-N-acetyl-alpha-D-glucosamine = a UDP-3-O-[(3R)-3-hydroxyacyl]-N-acetyl-alpha-D-glucosamine + holo-[ACP]. It functions in the pathway glycolipid biosynthesis; lipid IV(A) biosynthesis; lipid IV(A) from (3R)-3-hydroxytetradecanoyl-[acyl-carrier-protein] and UDP-N-acetyl-alpha-D-glucosamine: step 1/6. Functionally, involved in the biosynthesis of lipid A, a phosphorylated glycolipid that anchors the lipopolysaccharide to the outer membrane of the cell. The sequence is that of Acyl-[acyl-carrier-protein]--UDP-N-acetylglucosamine O-acyltransferase from Cupriavidus metallidurans (strain ATCC 43123 / DSM 2839 / NBRC 102507 / CH34) (Ralstonia metallidurans).